A 285-amino-acid chain; its full sequence is Short chain dehydrogenase sol3 (285 aa).

The NADP(+) site is built by Leu39, Lys64, and Asp87. Residues Ser168 and Tyr200 each act as proton donor in the active site. 3 residues coordinate NADP(+): Tyr200, Lys204, and Ser234. Lys204 serves as the catalytic Lowers pKa of active site Tyr.

The protein belongs to the short-chain dehydrogenases/reductases (SDR) family.

It functions in the pathway phytotoxin biosynthesis. Functionally, short chain dehydrogenase; part of the gene cluster that mediates the biosynthesis of the phytotoxin solanapyrone, a causal agent of early blight disease of potato and tomato. The prosolanapyrone synthase sol1 is a polyketide synthase that produces the octaketide desmethylprosolanapyrone I via sequential condensations of 7 malonyl-CoA units with one acetyl-CoA unit, and one methylation step. The octaketide backbone is further methylated by the sol2 O-methyltransferase to yield prosolanapyrone I. Prosolanapyrone I is hydroxylated to prosolanapyrone II by the cytochrome P450 monooxygenase sol6. The solanapyrone synthase sol5 then catalyzes the oxidation of prosolanapyrone II and the subsequent Diels Alder cycloisomerization of the product prosolanapyrone III to solanapyrones A and D. Solanapyrones A and D are then converted into solanapyrones B and E, respectively, by the sol3 dehydrogenase. The polypeptide is Short chain dehydrogenase sol3 (sol3) (Alternaria solani).